We begin with the raw amino-acid sequence, 153 residues long: 6,7-dimethyl-8-ribityllumazine synthase (153 aa).

5-amino-6-(D-ribitylamino)uracil is bound by residues Phe22, 56–58, and 80–82; these read AFE and TVI. 85–86 serves as a coordination point for (2S)-2-hydroxy-3-oxobutyl phosphate; sequence ST. His88 acts as the Proton donor in catalysis. 5-amino-6-(D-ribitylamino)uracil is bound at residue Phe113. A (2S)-2-hydroxy-3-oxobutyl phosphate-binding site is contributed by Arg127.

The protein belongs to the DMRL synthase family. In terms of assembly, forms an icosahedral capsid composed of 60 subunits, arranged as a dodecamer of pentamers.

It carries out the reaction (2S)-2-hydroxy-3-oxobutyl phosphate + 5-amino-6-(D-ribitylamino)uracil = 6,7-dimethyl-8-(1-D-ribityl)lumazine + phosphate + 2 H2O + H(+). It functions in the pathway cofactor biosynthesis; riboflavin biosynthesis; riboflavin from 2-hydroxy-3-oxobutyl phosphate and 5-amino-6-(D-ribitylamino)uracil: step 1/2. Catalyzes the formation of 6,7-dimethyl-8-ribityllumazine by condensation of 5-amino-6-(D-ribitylamino)uracil with 3,4-dihydroxy-2-butanone 4-phosphate. This is the penultimate step in the biosynthesis of riboflavin. This Actinobacillus pleuropneumoniae (Haemophilus pleuropneumoniae) protein is 6,7-dimethyl-8-ribityllumazine synthase.